A 388-amino-acid polypeptide reads, in one-letter code: Cytochrome b (388 aa).

4 helical membrane passes run Phe32–Met52, Trp76–Gly98, Thr113–Val133, and Phe179–Ile199. Heme b-binding residues include His82 and His96. Positions 183 and 197 each coordinate heme b. His202 is a binding site for a ubiquinone. Helical transmembrane passes span Phe226–Phe246, Leu290–Asp310, Leu322–Ala342, and Phe349–Pro369.

It belongs to the cytochrome b family. Fungal cytochrome b-c1 complex contains 10 subunits; 3 respiratory subunits, 2 core proteins and 5 low-molecular weight proteins. Cytochrome b-c1 complex is a homodimer. Heme b serves as cofactor.

The protein localises to the mitochondrion inner membrane. Functionally, component of the ubiquinol-cytochrome c reductase complex (complex III or cytochrome b-c1 complex) that is part of the mitochondrial respiratory chain. The b-c1 complex mediates electron transfer from ubiquinol to cytochrome c. Contributes to the generation of a proton gradient across the mitochondrial membrane that is then used for ATP synthesis. This chain is Cytochrome b (cob), found in Zymoseptoria tritici (Speckled leaf blotch fungus).